Reading from the N-terminus, the 253-residue chain is Probable transcriptional regulatory protein syc0529_d (253 aa).

The protein belongs to the TACO1 family.

The protein resides in the cytoplasm. This is Probable transcriptional regulatory protein syc0529_d from Synechococcus sp. (strain ATCC 27144 / PCC 6301 / SAUG 1402/1) (Anacystis nidulans).